The chain runs to 154 residues: Ribosomal RNA large subunit methyltransferase H (154 aa).

Residues Gly103 and 122-127 (FSKLTF) each bind S-adenosyl-L-methionine.

This sequence belongs to the RNA methyltransferase RlmH family. As to quaternary structure, homodimer.

It localises to the cytoplasm. It carries out the reaction pseudouridine(1915) in 23S rRNA + S-adenosyl-L-methionine = N(3)-methylpseudouridine(1915) in 23S rRNA + S-adenosyl-L-homocysteine + H(+). Functionally, specifically methylates the pseudouridine at position 1915 (m3Psi1915) in 23S rRNA. This chain is Ribosomal RNA large subunit methyltransferase H, found in Caldicellulosiruptor saccharolyticus (strain ATCC 43494 / DSM 8903 / Tp8T 6331).